The chain runs to 153 residues: Putative nuclear shuttle protein (153 aa).

This sequence belongs to the nanoviridae nuclear shuttle protein family.

The protein resides in the host nucleus. Its subcellular location is the host cytoplasm. Its function is as follows. Putative nuclear shuttle protein. The chain is Putative nuclear shuttle protein (DNA-N) from Faba bean necrotic yellows virus (isolate Syrian SV292-88) (FBNYV).